Here is a 257-residue protein sequence, read N- to C-terminus: Pimeloyl-[acyl-carrier protein] methyl ester esterase (257 aa).

An AB hydrolase-1 domain is found at 16 to 240; that stretch reads LVLIHGWGMN…EQASHAPFIS (225 aa). Substrate contacts are provided by residues W22, 82 to 83, and 143 to 147; these read SL and FMALQ. The active-site Nucleophile is the S82. Catalysis depends on residues D207 and H235. Substrate is bound at residue H235.

Belongs to the AB hydrolase superfamily. Carboxylesterase BioH family. Monomer.

The protein resides in the cytoplasm. The enzyme catalyses 6-carboxyhexanoyl-[ACP] methyl ester + H2O = 6-carboxyhexanoyl-[ACP] + methanol + H(+). It functions in the pathway cofactor biosynthesis; biotin biosynthesis. Functionally, the physiological role of BioH is to remove the methyl group introduced by BioC when the pimeloyl moiety is complete. It allows to synthesize pimeloyl-ACP via the fatty acid synthetic pathway through the hydrolysis of the ester bonds of pimeloyl-ACP esters. The sequence is that of Pimeloyl-[acyl-carrier protein] methyl ester esterase from Aliivibrio fischeri (strain ATCC 700601 / ES114) (Vibrio fischeri).